We begin with the raw amino-acid sequence, 363 residues long: Phosphatidylinositol transfer protein sfh-5 (363 aa).

The disordered stretch occupies residues 1–84 (MSTQPSDSAE…SPADIKDSVS (84 aa)). A compositionally biased stretch (basic and acidic residues) spans 36–46 (DAAKHAEEEPK). The span at 64–76 (KPAAAPAQEADSP) shows a compositional bias: low complexity. Residues 180–354 (AGDEPAVDEP…EYGGKGADLK (175 aa)) form the CRAL-TRIO domain. The heme site is built by Tyr-200, Arg-220, His-253, Tyr-255, and Lys-289.

Belongs to the SFH5 family. Heme b serves as cofactor.

The protein resides in the cytoplasm. It localises to the endoplasmic reticulum membrane. It is found in the microsome membrane. The catalysed reaction is a 1,2-diacyl-sn-glycero-3-phospho-(1D-myo-inositol)(in) = a 1,2-diacyl-sn-glycero-3-phospho-(1D-myo-inositol)(out). Its function is as follows. Non-classical phosphatidylinositol (PtdIns) transfer protein (PITP), which exhibits PtdIns-binding/transfer activity in the absence of detectable PtdCho-binding/transfer activity. Regulates PtdIns(4,5)P2 homeostasis at the plasma membrane. Heme-binding protein that may play a role in organic oxidant-induced stress responses. The protein is Phosphatidylinositol transfer protein sfh-5 (sfh-5) of Neurospora crassa (strain ATCC 24698 / 74-OR23-1A / CBS 708.71 / DSM 1257 / FGSC 987).